Reading from the N-terminus, the 142-residue chain is Transcriptional regulator MraZ (142 aa).

SpoVT-AbrB domains lie at 5–47 (EYPY…PLPG) and 76–119 (ASKA…NPQR).

The protein belongs to the MraZ family. Forms oligomers.

It is found in the cytoplasm. The protein resides in the nucleoid. The chain is Transcriptional regulator MraZ from Deinococcus radiodurans (strain ATCC 13939 / DSM 20539 / JCM 16871 / CCUG 27074 / LMG 4051 / NBRC 15346 / NCIMB 9279 / VKM B-1422 / R1).